The following is a 142-amino-acid chain: UPF0336 protein PPA1896 (142 aa).

This sequence belongs to the UPF0336 family.

The polypeptide is UPF0336 protein PPA1896 (Cutibacterium acnes (strain DSM 16379 / KPA171202) (Propionibacterium acnes)).